A 428-amino-acid chain; its full sequence is NADH-ubiquinone oxidoreductase chain 2 (428 aa).

14 consecutive transmembrane segments (helical) span residues 22 to 42 (IAFLSLLGYFVIMLNIWLHFG), 59 to 79 (LDESILSALLFILFLGLVIMN), 84 to 104 (LGWEFHLLLMGGLTGAIYMLT), 108 to 128 (LLLMVVGFEFLNLSTYLILSL), 140 to 160 (LLSSAFYTTLLLLAISFFYGL), 185 to 205 (ILLLGTIAFKLGLVPAHLWVP), 218 to 238 (WMGSVPKAAVLLWLPTIYPLL), 241 to 261 (LAPFLLVLSALSFLLSAVLMA), 269 to 289 (FLAYSAIGHLGFVVAAFAIGD), 292 to 312 (AYGYYIFIYMIATLAQFVLLS), 332 to 352 (LGLGFLVIVLTMASLPPFAGF), 356 to 376 (LLVLFGFLEIGYGIFAVLLIL), 384 to 404 (YYLKWIQTTFFSVVPFASAPI), and 408 to 428 (YPNLVSFLVTLILPSTLLLLL).

Belongs to the complex I subunit 2 family.

The protein localises to the mitochondrion inner membrane. The catalysed reaction is a ubiquinone + NADH + 5 H(+)(in) = a ubiquinol + NAD(+) + 4 H(+)(out). Core subunit of the mitochondrial membrane respiratory chain NADH dehydrogenase (Complex I) that is believed to belong to the minimal assembly required for catalysis. Complex I functions in the transfer of electrons from NADH to the respiratory chain. The immediate electron acceptor for the enzyme is believed to be ubiquinone. The chain is NADH-ubiquinone oxidoreductase chain 2 from Hyaloraphidium curvatum (Lower fungus).